We begin with the raw amino-acid sequence, 163 residues long: Nucleotide-binding protein RHA1_ro01989 (163 aa).

This sequence belongs to the YajQ family.

Nucleotide-binding protein. This Rhodococcus jostii (strain RHA1) protein is Nucleotide-binding protein RHA1_ro01989.